A 407-amino-acid chain; its full sequence is Probable succinyl-diaminopimelate desuccinylase (407 aa).

H72 serves as a coordination point for Zn(2+). D74 is a catalytic residue. D105 contributes to the Zn(2+) binding site. The Proton acceptor role is filled by E139. Zn(2+) contacts are provided by E140, E165, and H378.

The protein belongs to the peptidase M20A family. Zn(2+) serves as cofactor. It depends on Co(2+) as a cofactor.

The enzyme catalyses N-succinyl-(2S,6S)-2,6-diaminopimelate + H2O = (2S,6S)-2,6-diaminopimelate + succinate. It participates in amino-acid biosynthesis; L-lysine biosynthesis via DAP pathway; LL-2,6-diaminopimelate from (S)-tetrahydrodipicolinate (succinylase route): step 3/3. The polypeptide is Probable succinyl-diaminopimelate desuccinylase (dapE) (Staphylococcus aureus (strain N315)).